A 445-amino-acid polypeptide reads, in one-letter code: Gasdermin-A (445 aa).

Positions 1 to 251 are triggers pyroptosis; that stretch reads MTMFENVTRA…VILIQASDVG (251 aa). 9 to 13 provides a ligand contact to a cardiolipin; the sequence is RALAR. 4 beta stranded membrane-spanning segments follow: residues 78-95, 99-120, 163-179, and 183-197; these read NFGF…DVDV, VKVK…TLSV, VTLE…SLPF, and LGLQ…AVTI.

The protein belongs to the gasdermin family. In terms of assembly, homooligomer; homooligomeric ring-shaped pore complex containing 18-36 subunits when inserted in the membrane. In terms of processing, cleavage by S.pyogenes SpeB relieves autoinhibition by releasing the N-terminal moiety (Gasdermin-A, N-terminal) that initiates pyroptosis. Palmitoylated. As to expression, expressed predominantly in the gastrointestinal tract and, at a lower level, in the skin. Also detected in mammary gland. In the gastrointestinal tract, mainly expressed in differentiated cells, including the differentiated cell layer of esophagus and mucus-secreting pit cells of the gastric epithelium. Down-regulated in gastric cancer cells.

It is found in the cytoplasm. The protein resides in the perinuclear region. It localises to the cytosol. The protein localises to the cell membrane. The full-length protein before cleavage is inactive: intramolecular interactions between N- and C-terminal domains mediate autoinhibition in the absence of activation signal. The intrinsic pyroptosis-inducing activity is carried by the released N-terminal moiety (Gasdermin-A, N-terminal) following cleavage by S.pyogenes effector protein SpeB. Functionally, this form constitutes the precursor of the pore-forming protein and acts as a sensor of infection: upon infection by S.pyogenes, specifically cleaved by S.pyogenes effector protein SpeB in epithelial cells, releasing the N-terminal moiety (Gasdermin-A, N-terminal) that binds to membranes and forms pores, triggering pyroptosis. Pore-forming protein that causes membrane permeabilization and pyroptosis. Released upon cleavage by S.pyogenes effector protein SpeB, and binds to membrane inner leaflet lipids. Homooligomerizes within the membrane and forms pores of 10-15 nanometers (nm) of inner diameter, triggering pyroptosis. Pyroptosis triggers the elimination of the infected skin cell, depriving the pathogen of its protective niche, while inducing an inflammatory response. This ultimately prevents bacterial penetration of the epithelial barrier and a subsequent systemic dissemination of the pathogen. Binds to cardiolipin and other acidic phospholipids, such as phosphatidylserine, which mediate its targeting to the inner leaflet membrane. The polypeptide is Gasdermin-A (Homo sapiens (Human)).